The chain runs to 227 residues: Cysteine-rich hydrophobic domain-containing protein 1 (227 aa).

Positions methionine 1–leucine 84 are disordered. Over residues threonine 13–alanine 23 the composition is skewed to acidic residues. Over residues alanine 24–glycine 44 the composition is skewed to low complexity. The span at proline 45–valine 72 shows a compositional bias: acidic residues. Residues aspartate 46–proline 73 adopt a coiled-coil conformation.

It belongs to the CHIC family. Post-translationally, palmitoylated. In terms of tissue distribution, expressed moderately in the brain.

It localises to the cell membrane. It is found in the cytoplasmic vesicle. The sequence is that of Cysteine-rich hydrophobic domain-containing protein 1 (Chic1) from Mus musculus (Mouse).